Consider the following 1030-residue polypeptide: MMS19 nucleotide excision repair protein homolog (1030 aa).

Residue alanine 2 is modified to N-acetylalanine. HEAT repeat units lie at residues 866–904 (QRFF…RLPK), 908–946 (LPEL…EAPQ), 949–987 (SLHV…LPTP), and 990–1028 (LPYK…LGSP). At serine 1027 the chain carries Phosphoserine.

Belongs to the MET18/MMS19 family. Component of the CIA complex. In the CIA complex, interacts directly with CIAO2B and CIAO3. Component of the MMXD complex, composed of CIAO1, ERCC2, CIAO2B, MMS19 and SLC25A5. Interacts with CIAO2B; the interaction is direct. Interacts with ERCC2/XPD; the interaction is direct. Interacts with ERCC3/XPB and NCOA3/RAC3. Interacts with RTEL1; the interaction mediates the association of RTEL1 with the CIA complex. Interacts with BRIP1. Interacts with KIF4A; the interaction facilitates the transfer of Fe-S clusters to KIF4A to ensure proper localization of KIF4A to the mitotic machinery components. Interacts with CCDC117; the interaction is indirect. Post-translationally, ubiquitinated; undergoes 'Lys-48'-linked polyubiquitination.

The protein localises to the nucleus. It is found in the cytoplasm. It localises to the cytoskeleton. The protein resides in the spindle. Key component of the cytosolic iron-sulfur protein assembly (CIA) complex, a multiprotein complex that mediates the incorporation of iron-sulfur cluster into apoproteins specifically involved in DNA metabolism and genomic integrity. In the CIA complex, MMS19 acts as an adapter between early-acting CIA components and a subset of cellular target Fe/S proteins such as ERCC2/XPD, FANCJ and RTEL1, thereby playing a key role in nucleotide excision repair (NER), homologous recombination-mediated double-strand break DNA repair, DNA replication and RNA polymerase II (POL II) transcription. As a CIA complex component and in collaboration with CIAO1 and CIAO2, binds to and facilitates the assembly of most cytosolic-nuclear Fe/S proteins. As part of the mitotic spindle-associated MMXD complex, plays a role in chromosome segregation, probably by facilitating iron-sulfur cluster assembly into ERCC2/XPD. Together with CIAO2, facilitates the transfer of Fe-S clusters to the motor protein KIF4A, which ensures proper localization of KIF4A to mitotic machinery components to promote the progression of mitosis. Indirectly acts as a transcriptional coactivator of estrogen receptor (ER), via its role in iron-sulfur insertion into some component of the TFIIH-machinery. The sequence is that of MMS19 nucleotide excision repair protein homolog from Bos taurus (Bovine).